Consider the following 751-residue polypeptide: MWKLLPAAGAAPGEPYRLLAGVEYVVGRKNCGILIENDQSISRNHAVLTVNFPVTSLSQTDEIPTLTIKDNSKYGTFVNEEKMQTGLSCTLKTGDRVTFGVFESKFRVEYEPLVVCSSCLDVSGKTVLNQAILQLGGLTANNWTEECTHLVMSAVKVTIKTICALICGRPIIKPEYFSEFLKAVESKKQPPDIESFYPPIDEPAIGSKSVDLSGRHERKQIFKGKTFVFLNAKQHKKLSSAVAFGGGEARLMAEDDEEEQSFFSAPGTCVVDVGITNTQLIISHSQKKWIHLIMDTLQRNGLRPIPEAEIGLAVIFMTTENYCNPQGQPCTELKTTTPGPSLSQVLSANGKIIPSAPVNMTTYVADTESEPADTCMPLSERPEEVKIPGLEQSSRKLSQETFNIKEAPKPSSKANNVASDTLVRGKTPSYQLSPMKFPVANKNKDWTSQQQQNSIKNYFQPCTRKRERDEDNPELSSCKSSRMELSCSLLEQTQPAGPSLWKSKEHQSQNATLDREADTSSVGGMDIELNRKSPDRKPLPTETLRPRKRKDVDLATEEEVLEELLRSTKPELAVQVKVEKQEADDTIRKKPRMDAERNRPLNGGSEPESNSALQEDEREKKDELQTESWSTKHEIANSDGLQDSSEELPRKLLLTEFRSLVVSNHNSTSRNLCVNECGPLKNFKKFKKATFPGAGKLPHIIGGSDLVGHHARKNTELEEWLKQEMEVQKQQAKEESLADDLFRYNPNVKRR.

One can recognise an FHA domain in the interval 24–83 (YVVGRKNCGILIENDQSISRNHAVLTVNFPVTSLSQTDEIPTLTIKDNSKYGTFVNEEKM). BRCT domains follow at residues 105–181 (KFRV…SEFL) and 224–315 (GKTF…LAVI). The interval 111–328 (EPLVVCSSCL…TENYCNPQGQ (218 aa)) is mediates interaction with SP100. An interaction with MTOR, MAPKAP1 and RICTOR region spans residues 221 to 403 (IFKGKTFVFL…SRKLSQETFN (183 aa)). Position 337 is a phosphothreonine (Thr-337). Position 343 is a phosphoserine; by ATM (Ser-343). Phosphoserine occurs at positions 347 and 398. The segment at 389–418 (GLEQSSRKLSQETFNIKEAPKPSSKANNVA) is disordered. Ser-433 bears the Phosphoserine; by CDK2 mark. Lys-436 is covalently cross-linked (Glycyl lysine isopeptide (Lys-Gly) (interchain with G-Cter in ubiquitin)). Disordered stretches follow at residues 444–479 (KDWTSQQQQNSIKNYFQPCTRKRERDEDNPELSSCK) and 491–550 (EQTQ…RKRK). Residues 446-457 (WTSQQQQNSIKN) are compositionally biased toward polar residues. The short motif at 461–467 (PCTRKRE) is the Nuclear localization signal element. Composition is skewed to basic and acidic residues over residues 502 to 518 (KSKEHQSQNATLDREAD) and 528 to 539 (ELNRKSPDRKPL). Ser-508 is modified (phosphoserine). Glycyl lysine isopeptide (Lys-Gly) (interchain with G-Cter in SUMO2) cross-links involve residues Lys-569 and Lys-580. The disordered stretch occupies residues 576-645 (VKVEKQEADD…ANSDGLQDSS (70 aa)). Composition is skewed to basic and acidic residues over residues 577–599 (KVEKQEADDTIRKKPRMDAERNR) and 615–636 (EDEREKKDELQTESWSTKHEIA). Glycyl lysine isopeptide (Lys-Gly) (interchain with G-Cter in ubiquitin) cross-links involve residues Lys-684, Lys-688, and Lys-733. Residues 731 to 742 (QAKEESLADDLF) are compositionally biased toward basic and acidic residues. Positions 731–751 (QAKEESLADDLFRYNPNVKRR) are disordered. The short motif at 738 to 747 (ADDLFRYNPN) is the FxF/Y motif element.

Belongs to the Nibrin family. As to quaternary structure, component of the MRN complex composed of two heterodimers RAD50 and MRE11 associated with a single NBN. The MRN complexes dimerize on DNA to form joined MRN-MRN oligomers required for DNA double-strand break repair. As part of the MRN complex, interacts with MCM9; the interaction recruits the complex to DNA repair sites. Component of the BASC complex, at least composed of BRCA1, MSH2, MSH6, MLH1, ATM, BLM, RAD50, MRE11 and NBN. Interacts with histone H2AX; this requires phosphorylation of H2AX on 'Ser-139' and promotes NBN recruitment to DNA damage sites. Interacts with (phosphorylated) MDC1; promoting NBN recruitment to DNA damage sites. Interacts with (phosphorylated) RAD17; promoting NBN recruitment to DNA damage sites. Interacts (via FxF/Y motif) with ATM. Interacts with HJURP. Interacts with INTS3. Interacts with KPNA2. Interacts with TERF2; interaction is disrupted upon NBN phosphorylation by CDK2. Interacts with (phosphorylated) RBBP8/CtIP; the interaction links the role of the MRN complex in DNA double-strand break sensing to resection. Interacts with SP100; recruits NBN to PML bodies. Interacts with ATF2. Interacts with MTOR, MAPKAP1 isoform 2 and RICTOR; indicative for an association with the mTORC2 complex. Interacts with MRNIP. Interacts with UFL1; promoting UFL1 recruitment to double-strand breaks following DNA damage. Interacts with CYREN (via XLF motif). In terms of processing, ubiquitinated at Lys-436 via 'Lys-6'-linked ubiquitin chains by RNF8, promoting NBN recruitment to DNA double-strand breaks (DSBs). Ubiquitinated at Lys-684 and Lys-688 via 'Lys-63'-linked ubiquitin chains by PELI1: ubiquitination takes place following PELI1 phosphorylation and promotes ATM activation and DNA repair. Ubiquitinated at Lys-733 via 'Lys-63'-linked ubiquitin chains by the SCF(SKP2) complex: ubiquitination takes place following SKP2 phosphorylation and promotes ATM activation and DNA repair. Post-translationally, phosphorylated by ATM in response of ionizing radiation, and such phosphorylation is responsible intra-S phase checkpoint control and telomere maintenance. Phosphorylated at Ser-433 by CDK2 in S/G2 phases abolishes interaction with TERF2, enabling DCLRE1B/Apollo recruitment to telomeres. Phosphorylation at Ser-433 in response to dysfunctional telomeres promotes non-homologous end joining repair at telomeres, while dephosphorylation by PPP1CA promotes microhomology-mediated end-joining (MMEJ) repair. In terms of tissue distribution, high expression in the liver, heart and testis. Low expression in all other tissues analyzed. In the cerebellum the postmitotic Purkinje cells are marked specifically.

It localises to the nucleus. The protein resides in the chromosome. It is found in the PML body. The protein localises to the telomere. Functionally, component of the MRN complex, which plays a central role in double-strand break (DSB) repair, DNA recombination, maintenance of telomere integrity and meiosis. The MRN complex is involved in the repair of DNA double-strand breaks (DSBs) via homologous recombination (HR), an error-free mechanism which primarily occurs during S and G2 phases. The complex (1) mediates the end resection of damaged DNA, which generates proper single-stranded DNA, a key initial steps in HR, and is (2) required for the recruitment of other repair factors and efficient activation of ATM and ATR upon DNA damage. The MRN complex possesses single-strand endonuclease activity and double-strand-specific 3'-5' exonuclease activity, which are provided by MRE11, to initiate end resection, which is required for single-strand invasion and recombination. Within the MRN complex, NBN acts as a protein-protein adapter, which specifically recognizes and binds phosphorylated proteins, promoting their recruitment to DNA damage sites. Recruits MRE11 and RAD50 components of the MRN complex to DSBs in response to DNA damage. Promotes the recruitment of PI3/PI4-kinase family members ATM, ATR, and probably DNA-PKcs to the DNA damage sites, activating their functions. Mediates the recruitment of phosphorylated RBBP8/CtIP to DSBs, leading to cooperation between the MRN complex and RBBP8/CtIP to initiate end resection. RBBP8/CtIP specifically promotes the endonuclease activity of the MRN complex to clear DNA ends containing protein adducts. The MRN complex is also required for the processing of R-loops. NBN also functions in telomere length maintenance via its interaction with TERF2: interaction with TERF2 during G1 phase preventing recruitment of DCLRE1B/Apollo to telomeres. NBN also promotes DNA repair choice at dysfunctional telomeres: NBN phosphorylation by CDK2 promotes non-homologous end joining repair at telomeres, while unphosphorylated NBN promotes microhomology-mediated end-joining (MMEJ) repair. Enhances AKT1 phosphorylation possibly by association with the mTORC2 complex. The protein is Nibrin of Mus musculus (Mouse).